The primary structure comprises 270 residues: tRNA pseudouridine synthase A (270 aa).

Asp60 (nucleophile) is an active-site residue. Residues 107–111 are RNA binding; that stretch reads FHARF. Substrate is bound at residue Tyr118. The interaction with tRNA stretch occupies residues 168–172; sequence QCQSR.

The protein belongs to the tRNA pseudouridine synthase TruA family. As to quaternary structure, homodimer.

It carries out the reaction uridine(38/39/40) in tRNA = pseudouridine(38/39/40) in tRNA. In terms of biological role, formation of pseudouridine at positions 38, 39 and 40 in the anticodon stem and loop of transfer RNAs. The protein is tRNA pseudouridine synthase A of Klebsiella pneumoniae (strain 342).